The chain runs to 325 residues: Xylosidase/arabinosidase (325 aa).

Asp-16 functions as the Proton acceptor in the catalytic mechanism. The active-site Proton donor is Glu-224.

Belongs to the glycosyl hydrolase 43 family.

The enzyme catalyses Hydrolysis of (1-&gt;4)-beta-D-xylans, to remove successive D-xylose residues from the non-reducing termini.. It carries out the reaction Hydrolysis of terminal non-reducing alpha-L-arabinofuranoside residues in alpha-L-arabinosides.. In Bacteroides ovatus, this protein is Xylosidase/arabinosidase (xsa).